We begin with the raw amino-acid sequence, 286 residues long: uncharacterized protein (286 aa).

Transmembrane regions (helical) follow at residues 52 to 74 (ILWTIIVANGAILFTAHYVLIGL), 79 to 101 (LIAIFVVMLSGVMLYAPLAFLFL), 142 to 161 (WWDPLLVGFFWIAAGFVSFF), 168 to 190 (VLVFLLLIAPLALLSVKCPGAIL), 203 to 225 (IQATFLVKLAVLIFASLAAVALV), and 257 to 276 (IIWIAWIMLTSLGLLIASFM).

Its subcellular location is the cell membrane. This is an uncharacterized protein from Archaeoglobus fulgidus (strain ATCC 49558 / DSM 4304 / JCM 9628 / NBRC 100126 / VC-16).